We begin with the raw amino-acid sequence, 101 residues long: Small ribosomal subunit protein uS14 (101 aa).

It belongs to the universal ribosomal protein uS14 family. As to quaternary structure, part of the 30S ribosomal subunit. Contacts proteins S3 and S10.

Its function is as follows. Binds 16S rRNA, required for the assembly of 30S particles and may also be responsible for determining the conformation of the 16S rRNA at the A site. This chain is Small ribosomal subunit protein uS14, found in Corynebacterium efficiens (strain DSM 44549 / YS-314 / AJ 12310 / JCM 11189 / NBRC 100395).